The chain runs to 454 residues: MARIHLIIILLVISSTSSSSSSLREQEEDMIKALPGQPQVGFSQFSGYVTVNESHGRSLFYWLTESPSSSHTKPLLLWLNGGPGCSSIGYGASEEIGPFRINKTGSNLYLNKFTWNTEANILFLESPAGVGFSYTNTSSDLKDSGDERTAQENLIFLIKWMSRFPQYQYRDFYIVGESYAGHYVPQLAKKIHLYNKAFNNTPIINLKGFMVGNGDMDKHYDRLGAAMYAWSHAMISDKTYKSILKHCSFTADKTSDKCNWALYFAYREFGKVNGYSIYSPSCVHQTNQTKFLHGRLLVEEYEYDPCTESYAEIYYNRPDVQRAMHANLTSIPYKWTLCNMVVNNNWKDSEFSMLPIYKELTAAGLRIWVFSGDTDAVVPVTGTRLALSKLNLPVKTPWYPWYSEKQVGGWTEVYEGLTFATIRGAGHEVPVLQPERALTLLRSFLAGKELPRSY.

An N-terminal signal peptide occupies residues 1-22 (MARIHLIIILLVISSTSSSSSS). Asn52, Asn102, and Asn136 each carry an N-linked (GlcNAc...) asparagine glycan. Disulfide bonds link Cys85–Cys338, Cys247–Cys258, and Cys282–Cys306. The active site involves Ser178. Residues Asn287 and Asn327 are each glycosylated (N-linked (GlcNAc...) asparagine). Catalysis depends on residues Asp375 and His427.

It belongs to the peptidase S10 family. Expression not detected.

It localises to the secreted. Functionally, probable carboxypeptidase. The chain is Putative serine carboxypeptidase-like 23 (SCPL23) from Arabidopsis thaliana (Mouse-ear cress).